Reading from the N-terminus, the 270-residue chain is Probable aquaporin NIP-type (270 aa).

Helical transmembrane passes span 45–65 (LIAEAIGTYFVIFAGCGSVAV) and 72–92 (VTFPGICVTWGLIVMVMVYTV). Positions 101 to 103 (NPA) match the NPA 1 motif. The next 3 membrane-spanning stretches (helical) occupy residues 121–141 (LYIIAQLMGSILASGTLALLF), 160–180 (SLAIEIIISFLLMFVISGVAT), and 188–208 (VAGIAVGMTITLNVFVAGPIS). The NPA 2 motif lies at 213–215 (NPA). The helical transmembrane segment at 231–251 (WVYVVGPIIGTLAGAFVYNLI) threads the bilayer.

It belongs to the MIP/aquaporin (TC 1.A.8) family. NIP (TC 1.A.8.12) subfamily. Pollen specific.

It localises to the membrane. Aquaporins facilitate the transport of water and small neutral solutes across cell membranes. The chain is Probable aquaporin NIP-type from Nicotiana alata (Winged tobacco).